Reading from the N-terminus, the 94-residue chain is Pyrimidine/purine nucleoside phosphorylase (94 aa).

Belongs to the nucleoside phosphorylase PpnP family.

It catalyses the reaction a purine D-ribonucleoside + phosphate = a purine nucleobase + alpha-D-ribose 1-phosphate. The enzyme catalyses adenosine + phosphate = alpha-D-ribose 1-phosphate + adenine. The catalysed reaction is cytidine + phosphate = cytosine + alpha-D-ribose 1-phosphate. It carries out the reaction guanosine + phosphate = alpha-D-ribose 1-phosphate + guanine. It catalyses the reaction inosine + phosphate = alpha-D-ribose 1-phosphate + hypoxanthine. The enzyme catalyses thymidine + phosphate = 2-deoxy-alpha-D-ribose 1-phosphate + thymine. The catalysed reaction is uridine + phosphate = alpha-D-ribose 1-phosphate + uracil. It carries out the reaction xanthosine + phosphate = alpha-D-ribose 1-phosphate + xanthine. Catalyzes the phosphorolysis of diverse nucleosides, yielding D-ribose 1-phosphate and the respective free bases. Can use uridine, adenosine, guanosine, cytidine, thymidine, inosine and xanthosine as substrates. Also catalyzes the reverse reactions. The protein is Pyrimidine/purine nucleoside phosphorylase of Pseudomonas putida (strain GB-1).